The following is a 311-amino-acid chain: Homoserine kinase (311 aa).

89-99 (PFARGLGSSAT) provides a ligand contact to ATP.

It belongs to the GHMP kinase family. Homoserine kinase subfamily.

It is found in the cytoplasm. It carries out the reaction L-homoserine + ATP = O-phospho-L-homoserine + ADP + H(+). The protein operates within amino-acid biosynthesis; L-threonine biosynthesis; L-threonine from L-aspartate: step 4/5. Its function is as follows. Catalyzes the ATP-dependent phosphorylation of L-homoserine to L-homoserine phosphate. This chain is Homoserine kinase, found in Halothermothrix orenii (strain H 168 / OCM 544 / DSM 9562).